The following is a 335-amino-acid chain: Anthranilate phosphoribosyltransferase (335 aa).

5-phospho-alpha-D-ribose 1-diphosphate-binding positions include Gly-79, 82–83 (GD), Thr-87, 89–92 (NIST), 107–115 (KHGSRSVSS), and Ser-119. An anthranilate-binding site is contributed by Gly-79. Ser-91 is a binding site for Mg(2+). Arg-165 is a binding site for anthranilate. Residues Asp-223 and Glu-224 each contribute to the Mg(2+) site.

It belongs to the anthranilate phosphoribosyltransferase family. Homodimer. The cofactor is Mg(2+).

It carries out the reaction N-(5-phospho-beta-D-ribosyl)anthranilate + diphosphate = 5-phospho-alpha-D-ribose 1-diphosphate + anthranilate. Its pathway is amino-acid biosynthesis; L-tryptophan biosynthesis; L-tryptophan from chorismate: step 2/5. Its function is as follows. Catalyzes the transfer of the phosphoribosyl group of 5-phosphorylribose-1-pyrophosphate (PRPP) to anthranilate to yield N-(5'-phosphoribosyl)-anthranilate (PRA). This chain is Anthranilate phosphoribosyltransferase, found in Helicobacter pylori (strain Shi470).